A 775-amino-acid chain; its full sequence is MNTIRSQWKDIVTSKKLLIPIIAILFVPLIYSGVFLKAYWDPYGTVDQLPVVVVNQDKGATYEGEKLQIGDDLVKELKDNNNFDWHFSNDLDQSLKDLLNQKYYLVVEIPEDFSKNASTVLDKNPKKLDLKYHTNAGSNYVGATIGEKAIDKLKASVSKEVTEQYTKVIFDNFKDIAKGLSDASSGAKKIDDGTKDAKNGSAQLKENLAKLKESTATISDKTAQLADGAAQVTSGIQSLDSSLGKFQDSSNQIYDKSSQLAAGSGELTSKMNELLAGLQNVQKGTPNLTNGLDQLNSKVQEGSEKAAKAEKIINALDLTKLETAVNNLEKSETAMKEFKKQLTDFENSLKNRDQAFKNVINSSDFLTAEQKSQLINSVEKKLPQVDAPDFDQILSQLPTADQLPDIATIKSSLEDVKAQVAQVKAMPEATSKLYNGAKTIQDAIDRLTEGADKIYNGSQKLTDGQTKLTAGIGEYNKQFAKAKAGSEQLVTGSSQVSGGLFKLLDGSKQVQSGSSKLADGSASLDTGLGKLLDGTGELSSKLKDAADQTGDIDADDQTYGMFADPVKTKDDAIHSVPNYGTGLTPYILSMGLYVGGIMLTVVFPLKEASGRPRNGFEWFFSKFNVMMLVGIIQSLIVATVLLLGIGLEVESTWRFYVFTIITSLAFLAIIQFLATTMGNPGRFIAVIILVLQLGASGGTFPLELLPNFYQVIHGALPMTYSINGFRAVISNGDFGYMWQMAGVLIGIALVMIALSITYFTMLSRKEETSEEQPAS.

5 helical membrane-spanning segments follow: residues 16 to 36 (KLLIPIIAILFVPLIYSGVFL), 585 to 605 (PYILSMGLYVGGIMLTVVFPL), 625 to 645 (VMMLVGIIQSLIVATVLLLGI), 655 to 675 (FYVFTIITSLAFLAIIQFLAT), and 742 to 762 (GVLIGIALVMIALSITYFTML).

It to L.lactis phage infection protein (PIP).

It is found in the cell membrane. This is an uncharacterized protein from Bacillus subtilis (strain 168).